The primary structure comprises 161 residues: Nucleotide-binding protein Pfl01_4421 (161 aa).

Belongs to the YajQ family.

Nucleotide-binding protein. The chain is Nucleotide-binding protein Pfl01_4421 from Pseudomonas fluorescens (strain Pf0-1).